The chain runs to 288 residues: MSGLRALLGLGLLVAGSRLSRVRVQAGSCRAGATWWVPQRLISGGRGDSEVMASSAVKYLSQEEAQAVDQELFNEYQFSVDQLMELAGLSCATAIAKAYPPTSLSRSPPTVLVICGPGNNGGDGLVCARHLKLFGYQPTIYYPKRPNKPLFTALVTQCQKMDIPFLGEMPPEPMLIDELYELVVDAIFGFSFTGEVREPFRSILSVLNGLTVPIASIDIPSGWDVEKGSSGGIQPDLLISLTAPKKSATQFTGRYHYLGGRFVPPALEKKYQLNLPPYPDTECVYRLQ.

The transit peptide at 1 to 32 (MSGLRALLGLGLLVAGSRLSRVRVQAGSCRAG) directs the protein to the mitochondrion. Ser-49 is modified (phosphoserine). A YjeF N-terminal domain is found at 65–275 (AQAVDQELFN…ALEKKYQLNL (211 aa)). A (6S)-NADPHX-binding site is contributed by 119–123 (NNGGD). A K(+)-binding site is contributed by Asn-120. Lys-144 carries the N6-succinyllysine modification. Position 185 (Asp-185) interacts with K(+). (6S)-NADPHX contacts are provided by residues 189–195 (GFSFTGE) and Asp-218. Residue Ser-221 participates in K(+) binding.

It belongs to the NnrE/AIBP family. As to quaternary structure, homodimer. Interacts with APOA1 and APOA2. The cofactor is K(+). Undergoes physiological phosphorylation during sperm capacitation, downstream to PKA activation.

Its subcellular location is the mitochondrion. It is found in the secreted. The enzyme catalyses (6R)-NADHX = (6S)-NADHX. It catalyses the reaction (6R)-NADPHX = (6S)-NADPHX. In terms of biological role, catalyzes the epimerization of the S- and R-forms of NAD(P)HX, a damaged form of NAD(P)H that is a result of enzymatic or heat-dependent hydration. This is a prerequisite for the S-specific NAD(P)H-hydrate dehydratase to allow the repair of both epimers of NAD(P)HX. Accelerates cholesterol efflux from endothelial cells to high-density lipoprotein (HDL) and thereby regulates angiogenesis. The protein is NAD(P)H-hydrate epimerase of Bos taurus (Bovine).